Here is a 122-residue protein sequence, read N- to C-terminus: Fluoride-specific ion channel FluC (122 aa).

A run of 4 helical transmembrane segments spans residues Leu6–Val26, Ser33–Phe53, Gly60–Phe80, and Leu101–Phe121. Residues Gly75 and Thr78 each contribute to the Na(+) site.

The protein belongs to the fluoride channel Fluc/FEX (TC 1.A.43) family.

The protein localises to the cell inner membrane. The enzyme catalyses fluoride(in) = fluoride(out). Its activity is regulated as follows. Na(+) is not transported, but it plays an essential structural role and its presence is essential for fluoride channel function. In terms of biological role, fluoride-specific ion channel. Important for reducing fluoride concentration in the cell, thus reducing its toxicity. The polypeptide is Fluoride-specific ion channel FluC (Campylobacter jejuni subsp. jejuni serotype O:2 (strain ATCC 700819 / NCTC 11168)).